The sequence spans 239 residues: MIEQWQRGFVLHRREYSESSLLVDFFTENHGRITLLAKGVRRPRSPLKSVLQPFTPLLLKWTGKGDLKTLTKAEPASLTLPMQTLALYSGFYVNEVLARVLENHTAYPELFQHYLHCMTKLASQPNEIEPILRTFEFQTLKALGYGVDFCHCAATGKPVDPKMSYQFRENEGFIASLLQNNYTFIGKDLLAFAEMDFSEKETLQSAKRFTRIALKPYLGSAPLKSRELFQSVLPNRLKG.

Belongs to the RecO family.

In terms of biological role, involved in DNA repair and RecF pathway recombination. In Glaesserella parasuis serovar 5 (strain SH0165) (Haemophilus parasuis), this protein is DNA repair protein RecO.